The chain runs to 254 residues: Glutamate racemase (254 aa).

Substrate is bound by residues 7 to 8 and 39 to 40; these read DS and YG. Catalysis depends on C70, which acts as the Proton donor/acceptor. 71–72 is a binding site for substrate; that stretch reads NT. The active-site Proton donor/acceptor is C178. 179–180 contacts substrate; it reads TH.

The protein belongs to the aspartate/glutamate racemases family.

The enzyme catalyses L-glutamate = D-glutamate. It participates in cell wall biogenesis; peptidoglycan biosynthesis. Its function is as follows. Provides the (R)-glutamate required for cell wall biosynthesis. The sequence is that of Glutamate racemase from Aquifex aeolicus (strain VF5).